The following is a 301-amino-acid chain: uncharacterized protein (301 aa).

Residues E146, E148, and D177 each coordinate a divalent metal cation.

This sequence belongs to the FAH family.

This is an uncharacterized protein from Staphylococcus epidermidis (strain ATCC 12228 / FDA PCI 1200).